The chain runs to 321 residues: ATP-dependent 6-phosphofructokinase (321 aa).

Glycine 11 serves as a coordination point for ATP. 21-25 provides a ligand contact to ADP; it reads RAVVR. Residues 72–73 and 102–105 each bind ATP; these read RC and GDGS. Residue aspartate 103 coordinates Mg(2+). Residue 126 to 128 participates in substrate binding; sequence TID. The active-site Proton acceptor is aspartate 128. Arginine 155 provides a ligand contact to ADP. Residues arginine 163 and 170–172 each bind substrate; that span reads MGR. ADP is bound by residues 186-188, arginine 212, and 214-216; these read GAE and KLH. Substrate-binding positions include glutamate 223, arginine 245, and 251–254; that span reads HIQR.

It belongs to the phosphofructokinase type A (PFKA) family. ATP-dependent PFK group I subfamily. Prokaryotic clade 'B1' sub-subfamily. Homotetramer. Mg(2+) is required as a cofactor.

The protein resides in the cytoplasm. The catalysed reaction is beta-D-fructose 6-phosphate + ATP = beta-D-fructose 1,6-bisphosphate + ADP + H(+). The protein operates within carbohydrate degradation; glycolysis; D-glyceraldehyde 3-phosphate and glycerone phosphate from D-glucose: step 3/4. Allosterically activated by ADP and other diphosphonucleosides, and allosterically inhibited by phosphoenolpyruvate. In terms of biological role, catalyzes the phosphorylation of D-fructose 6-phosphate to fructose 1,6-bisphosphate by ATP, the first committing step of glycolysis. The protein is ATP-dependent 6-phosphofructokinase of Thermoanaerobacter pseudethanolicus (strain ATCC 33223 / 39E) (Clostridium thermohydrosulfuricum).